The sequence spans 322 residues: Protease HtpX homolog (322 aa).

The next 2 membrane-spanning stretches (helical) occupy residues 19-39 and 61-81; these read ILLI…CYLL and FINL…IAYF. H165 lines the Zn(2+) pocket. Residue E166 is part of the active site. Position 169 (H169) interacts with Zn(2+). The next 2 helical transmembrane spans lie at 175 to 195 and 216 to 236; these read VRLL…AQIA and ILIL…ATLM. E245 provides a ligand contact to Zn(2+).

Belongs to the peptidase M48B family. Requires Zn(2+) as cofactor.

The protein resides in the cell inner membrane. The sequence is that of Protease HtpX homolog from Bacteroides fragilis (strain ATCC 25285 / DSM 2151 / CCUG 4856 / JCM 11019 / LMG 10263 / NCTC 9343 / Onslow / VPI 2553 / EN-2).